The chain runs to 323 residues: Ubiquinone biosynthesis protein COQ4, mitochondrial (323 aa).

4 residues coordinate Zn(2+): histidine 209, aspartate 210, histidine 213, and glutamate 225.

The protein belongs to the COQ4 family. In terms of assembly, component of a multi-subunit COQ enzyme complex, composed of at least COQ3, COQ4, COQ5, COQ6, COQ7 and COQ9. Requires Zn(2+) as cofactor.

The protein resides in the mitochondrion inner membrane. The catalysed reaction is a 4-hydroxy-3-methoxy-5-(all-trans-polyprenyl)benzoate + H(+) = a 2-methoxy-6-(all-trans-polyprenyl)phenol + CO2. Its pathway is cofactor biosynthesis; ubiquinone biosynthesis. Lyase that catalyzes the C1-decarboxylation of 4-hydroxy-3-methoxy-5-(all-trans-polyprenyl)benzoic acid into 2-methoxy-6-(all-trans-polyprenyl)phenol during ubiquinone biosynthesis. This chain is Ubiquinone biosynthesis protein COQ4, mitochondrial, found in Debaryomyces hansenii (strain ATCC 36239 / CBS 767 / BCRC 21394 / JCM 1990 / NBRC 0083 / IGC 2968) (Yeast).